We begin with the raw amino-acid sequence, 504 residues long: Protein Dok-7 (504 aa).

Positions 4–109 (AALVEGQVKL…WDTRIRYALG (106 aa)) constitute a PH domain. The IRS-type PTB domain occupies 105-210 (RYALGEVHRF…RGISPTKGPF (106 aa)). 3 disordered regions span residues 210–232 (FGLR…ERVA), 248–348 (LSHS…HSSY), and 371–483 (SLLS…PHAG). The span at 263 to 280 (LSSSSSEASHSDISASSR) shows a compositional bias: low complexity. 3 stretches are compositionally biased toward polar residues: residues 285–297 (PEQS…TSQE), 331–341 (GRQSSSDSGIA), and 421–430 (PASQGSSDHG).

In terms of assembly, homodimer. Forms a heterotetramer composed of 2 DOK7 and 2 MUSK molecules which facilitates MUSK trans-autophosphorylation on tyrosine residue and activation. Interacts (via IRS-type PTB domain) with MUSK (via cytoplasmic part); requires MUSK phosphorylation.

It localises to the cell membrane. The protein localises to the synapse. Functionally, probable muscle-intrinsic activator of MUSK that plays an essential role in neuromuscular synaptogenesis. Acts in aneural activation of MUSK and subsequent acetylcholine receptor (AchR) clustering in myotubes. Induces autophosphorylation of MUSK. The polypeptide is Protein Dok-7 (Dok7) (Mus musculus (Mouse)).